The sequence spans 534 residues: Coiled-coil domain-containing protein 183 (534 aa).

Coiled coils occupy residues 10 to 54 (EEQT…NIRR), 136 to 209 (DASK…DMKI), and 323 to 396 (LAQR…HSNM).

The chain is Coiled-coil domain-containing protein 183 (CCDC183) from Homo sapiens (Human).